We begin with the raw amino-acid sequence, 475 residues long: Tesmin (475 aa).

Phosphoserine occurs at positions 34 and 67. The region spanning 263–372 (SGPALQGPPK…KCIACKNYEE (110 aa)) is the CRC domain.

This sequence belongs to the lin-54 family.

Its subcellular location is the cytoplasm. It is found in the nucleus. Functionally, may have a role in spermatogenesis. The sequence is that of Tesmin from Rattus norvegicus (Rat).